A 398-amino-acid chain; its full sequence is S-adenosylmethionine synthase (398 aa).

A disordered region spans residues 1-21; the sequence is MAANRRLFTSESVTEGHPDKM. An ATP-binding site is contributed by histidine 17. Aspartate 19 is a Mg(2+) binding site. Glutamate 45 is a K(+) binding site. Residues glutamate 58 and glutamine 101 each coordinate L-methionine. A flexible loop region spans residues 101-111; sequence QSADIAGGVNQ. ATP contacts are provided by residues 177–179, 244–245, aspartate 253, 259–260, alanine 276, and lysine 280; these read DGK, RF, and RK. Aspartate 253 serves as a coordination point for L-methionine. Lysine 284 provides a ligand contact to L-methionine.

The protein belongs to the AdoMet synthase family. As to quaternary structure, homotetramer; dimer of dimers. It depends on Mg(2+) as a cofactor. K(+) is required as a cofactor.

Its subcellular location is the cytoplasm. The catalysed reaction is L-methionine + ATP + H2O = S-adenosyl-L-methionine + phosphate + diphosphate. It participates in amino-acid biosynthesis; S-adenosyl-L-methionine biosynthesis; S-adenosyl-L-methionine from L-methionine: step 1/1. Catalyzes the formation of S-adenosylmethionine (AdoMet) from methionine and ATP. The overall synthetic reaction is composed of two sequential steps, AdoMet formation and the subsequent tripolyphosphate hydrolysis which occurs prior to release of AdoMet from the enzyme. In Oceanobacillus iheyensis (strain DSM 14371 / CIP 107618 / JCM 11309 / KCTC 3954 / HTE831), this protein is S-adenosylmethionine synthase.